The chain runs to 340 residues: Protein-tyrosine-phosphatase PTP1 (340 aa).

The region spanning 58-326 is the Tyrosine-protein phosphatase domain; sequence IAHEFTGLQA…FFCYNAIVDE (269 aa). Substrate contacts are provided by residues Asp-234, 265-271, and Gln-311; that span reads CSAGIGR. Residue Cys-265 is the Phosphocysteine intermediate of the active site.

In terms of assembly, interacts with MPK6. Interacts with KIN10. Phosphorylated by KIN10. Expressed in roots, stems and flowers, and at low levels in leaves.

Its subcellular location is the cytoplasm. The protein localises to the cytosol. The protein resides in the nucleus. The catalysed reaction is O-phospho-L-tyrosyl-[protein] + H2O = L-tyrosyl-[protein] + phosphate. Inhibited by hydrogen peroxide. Its function is as follows. Protein-tyrosine-phosphatase that dephosphorylates and probably inhibits MPK6 in non-oxidative stress conditions. In association with MKP1, represses salicylic acid (SA) and camalexin biosynthesis, thus modulating defense response. May also repress MPK3. Dephosphorylates and inactivates MPK4 in vitro. In Arabidopsis thaliana (Mouse-ear cress), this protein is Protein-tyrosine-phosphatase PTP1 (PTP1).